The chain runs to 379 residues: Zinc metalloproteinase nas-20 (379 aa).

The N-terminal stretch at 1-20 (MKITVNFLLVALIGVPSVLS) is a signal peptide. Positions 21–29 (DRHITRDKR) are excised as a propeptide. The region spanning 30 to 208 (QAMRDYAKWE…VLLNKFYGCN (179 aa)) is the Peptidase M12A domain. Asn67 carries N-linked (GlcNAc...) asparagine glycosylation. Cystine bridges form between Cys70–Cys207, Cys91–Cys111, Cys209–Cys229, and Cys234–Cys243. Residue His119 participates in Zn(2+) binding. The active site involves Glu120. Zn(2+)-binding residues include His123 and His129. Asn185 is a glycosylation site (N-linked (GlcNAc...) asparagine). The EGF-like domain occupies 203–244 (KFYGCNCDNHPRKLDCKNGGYQNPANCEECLCTDGFNGQLCD). N-linked (GlcNAc...) asparagine glycosylation is found at Asn337 and Asn370.

The cofactor is Zn(2+).

It localises to the secreted. Functionally, metalloprotease. This Caenorhabditis elegans protein is Zinc metalloproteinase nas-20 (nas-20).